A 202-amino-acid polypeptide reads, in one-letter code: MRILGIDPGLTRCGVGVVDVYADRSARLVDVQVVRTSPTAELHHRLLAVGDGIEELVERHRPSVVAIERVFAQDNLSTVMGVAQITGVALVGAARRGLDVALHTPSEVKAAVTGYGQADKKQVATMVARILGLDELPTPADASDALALAICAGWRAGMSRAGIAGTPTPTARATGADAASGAGPTAAQAAWLAAERAQRGRR.

Active-site residues include D7, E68, and D141. Mg(2+) is bound by residues D7, E68, and D141.

The protein belongs to the RuvC family. As to quaternary structure, homodimer which binds Holliday junction (HJ) DNA. The HJ becomes 2-fold symmetrical on binding to RuvC with unstacked arms; it has a different conformation from HJ DNA in complex with RuvA. In the full resolvosome a probable DNA-RuvA(4)-RuvB(12)-RuvC(2) complex forms which resolves the HJ. Mg(2+) serves as cofactor.

The protein localises to the cytoplasm. The catalysed reaction is Endonucleolytic cleavage at a junction such as a reciprocal single-stranded crossover between two homologous DNA duplexes (Holliday junction).. In terms of biological role, the RuvA-RuvB-RuvC complex processes Holliday junction (HJ) DNA during genetic recombination and DNA repair. Endonuclease that resolves HJ intermediates. Cleaves cruciform DNA by making single-stranded nicks across the HJ at symmetrical positions within the homologous arms, yielding a 5'-phosphate and a 3'-hydroxyl group; requires a central core of homology in the junction. The consensus cleavage sequence is 5'-(A/T)TT(C/G)-3'. Cleavage occurs on the 3'-side of the TT dinucleotide at the point of strand exchange. HJ branch migration catalyzed by RuvA-RuvB allows RuvC to scan DNA until it finds its consensus sequence, where it cleaves and resolves the cruciform DNA. The polypeptide is Crossover junction endodeoxyribonuclease RuvC (Clavibacter michiganensis subsp. michiganensis (strain NCPPB 382)).